A 24-amino-acid polypeptide reads, in one-letter code: Humanin-like 9 (24 aa).

This sequence belongs to the humanin family. Highly expressed in the kidney, heart muscle and testis.

Its subcellular location is the secreted. The protein resides in the cytoplasm. Its function is as follows. Plays a role as a neuroprotective and antiapoptotic factor. This Homo sapiens (Human) protein is Humanin-like 9.